The chain runs to 183 residues: NEDD8-conjugating enzyme Ubc12 (183 aa).

Met1 is modified (N-acetylmethionine). The interval 1–29 (MIKLFSLKQQKKEEESAGGTKGSSKKASA) is disordered. The interval 1-57 (MIKLFSLKQQKKEEESAGGTKGSSKKASAAQLRIQKDINELNLPKTCDISFSDPDDL) is interaction with UBA3. Lys3 is subject to N6-acetyllysine. The region spanning 29–173 (AAQLRIQKDI…VQRSMRGGYI (145 aa)) is the UBC core domain. Ser50 carries the post-translational modification Phosphoserine. Cys111 acts as the Glycyl thioester intermediate in catalysis. Arg169 carries the post-translational modification Asymmetric dimethylarginine; alternate. The residue at position 169 (Arg169) is an Omega-N-methylarginine; alternate.

Belongs to the ubiquitin-conjugating enzyme family. UBC12 subfamily. As to quaternary structure, interacts with UBA3 and RBX1. Interacts (N-terminally acetylated form) with (via DCUN1 domain) DCUN1D1, DCUN1D2, DCUN1D3, DCUN1D4 and DCUN1D5. In terms of processing, the acetylation of Met-1 increases affinity for DCUN1D1 by about 2 orders of magnitude and is crucial for NEDD8 transfer to cullins.

The catalysed reaction is [E1 NEDD8-activating enzyme]-S-[NEDD8 protein]-yl-L-cysteine + [E2 NEDD8-conjugating enzyme]-L-cysteine = [E1 NEDD8-activating enzyme]-L-cysteine + [E2 NEDD8-conjugating enzyme]-S-[NEDD8-protein]-yl-L-cysteine.. Its pathway is protein modification; protein neddylation. Its function is as follows. Accepts the ubiquitin-like protein NEDD8 from the UBA3-NAE1 E1 complex and catalyzes its covalent attachment to other proteins. The specific interaction with the E3 ubiquitin ligase RBX1, but not RBX2, suggests that the RBX1-UBE2M complex neddylates specific target proteins, such as CUL1, CUL2, CUL3 and CUL4. Involved in cell proliferation. This Mus musculus (Mouse) protein is NEDD8-conjugating enzyme Ubc12 (Ube2m).